A 541-amino-acid chain; its full sequence is Chaperonin GroEL 2 (541 aa).

ATP contacts are provided by residues 29–32, 86–90, G413, 476–478, and D492; these read TLGP, DGTTT, and NAA.

The protein belongs to the chaperonin (HSP60) family. As to quaternary structure, forms a cylinder of 14 subunits composed of two heptameric rings stacked back-to-back. Interacts with the co-chaperonin GroES.

The protein resides in the secreted. It is found in the capsule. The protein localises to the cell surface. Its subcellular location is the cell wall. It catalyses the reaction ATP + H2O + a folded polypeptide = ADP + phosphate + an unfolded polypeptide.. Its function is as follows. Together with its co-chaperonin GroES, plays an essential role in assisting protein folding. The GroEL-GroES system forms a nano-cage that allows encapsulation of the non-native substrate proteins and provides a physical environment optimized to promote and accelerate protein folding. The chain is Chaperonin GroEL 2 from Mycolicibacterium vanbaalenii (strain DSM 7251 / JCM 13017 / BCRC 16820 / KCTC 9966 / NRRL B-24157 / PYR-1) (Mycobacterium vanbaalenii).